The primary structure comprises 249 residues: Enolase-phosphatase E1 (249 aa).

Mg(2+)-binding residues include Asp15 and Glu17. Residues 146 to 147 (SS) and Lys180 contribute to the substrate site. A Mg(2+)-binding site is contributed by Asp205.

It belongs to the HAD-like hydrolase superfamily. MasA/MtnC family. As to quaternary structure, monomer. Mg(2+) is required as a cofactor.

The protein resides in the cytoplasm. It localises to the nucleus. It catalyses the reaction 5-methylsulfanyl-2,3-dioxopentyl phosphate + H2O = 1,2-dihydroxy-5-(methylsulfanyl)pent-1-en-3-one + phosphate. It functions in the pathway amino-acid biosynthesis; L-methionine biosynthesis via salvage pathway; L-methionine from S-methyl-5-thio-alpha-D-ribose 1-phosphate: step 3/6. It participates in amino-acid biosynthesis; L-methionine biosynthesis via salvage pathway; L-methionine from S-methyl-5-thio-alpha-D-ribose 1-phosphate: step 4/6. Bifunctional enzyme that catalyzes the enolization of 2,3-diketo-5-methylthiopentyl-1-phosphate (DK-MTP-1-P) into the intermediate 2-hydroxy-3-keto-5-methylthiopentenyl-1-phosphate (HK-MTPenyl-1-P), which is then dephosphorylated to form the acireductone 1,2-dihydroxy-3-keto-5-methylthiopentene (DHK-MTPene). This chain is Enolase-phosphatase E1, found in Caenorhabditis briggsae.